A 466-amino-acid polypeptide reads, in one-letter code: Argininosuccinate lyase (466 aa).

Belongs to the lyase 1 family. Argininosuccinate lyase subfamily.

It localises to the cytoplasm. The catalysed reaction is 2-(N(omega)-L-arginino)succinate = fumarate + L-arginine. Its pathway is amino-acid biosynthesis; L-arginine biosynthesis; L-arginine from L-ornithine and carbamoyl phosphate: step 3/3. The polypeptide is Argininosuccinate lyase (Bartonella bacilliformis (strain ATCC 35685 / KC583 / Herrer 020/F12,63)).